Reading from the N-terminus, the 184-residue chain is MNWRSERIWIELITGSRKTSNFCWACILFLGSLGFLLVGTSSYLGRNLISLFPSQQIIFFPQGIVMSFYGIAGLFISSYLWCTISWNVGSGYDRFDRKEGIVCIFRWGFPGINRRIFLRFLMRDIQSIRMEVKGGLYSRRVLYMEIRGQGAIPLTRTDENFTPREIEQKAAELAYFLRVPIELK.

Helical transmembrane passes span N21–Y43 and I58–L80.

The protein belongs to the Ycf4 family.

The protein localises to the plastid. It is found in the chloroplast thylakoid membrane. Functionally, seems to be required for the assembly of the photosystem I complex. The chain is Photosystem I assembly protein Ycf4 from Calycanthus floridus var. glaucus (Eastern sweetshrub).